The chain runs to 401 residues: Putative phosphatidylinositol 4-phosphate 5-kinase 11 (401 aa).

The region spanning 1-390 (MELRATVENR…RFQDFVSNIF (390 aa)) is the PIPK domain. A compositionally biased stretch (polar residues) spans 242–260 (SFKSNSTKSMKTASSSPDR). A disordered region spans residues 242 to 268 (SFKSNSTKSMKTASSSPDRSSVAMYSC). The tract at residues 350 to 371 (YGMKKRIEHCYKSIQYNSNSIS) is activation loop.

It catalyses the reaction a 1,2-diacyl-sn-glycero-3-phospho-(1D-myo-inositol 4-phosphate) + ATP = a 1,2-diacyl-sn-glycero-3-phospho-(1D-myo-inositol-4,5-bisphosphate) + ADP + H(+). In Arabidopsis thaliana (Mouse-ear cress), this protein is Putative phosphatidylinositol 4-phosphate 5-kinase 11 (PIP5K11).